The primary structure comprises 995 residues: Secreted protein CSS1 (995 aa).

The N-terminal stretch at 1–23 (MFNRLNKFQAALALALYSQSALG) is a signal peptide. Residues 26–253 (YSNSTSISSN…GVSSSGSQSV (228 aa)) enclose the Methyl-accepting transducer domain. N-linked (GlcNAc...) asparagine glycans are attached at residues asparagine 28 and asparagine 35. The segment at 98–276 (SSSSVSDVSS…TSSASTASGS (179 aa)) is disordered. Residues asparagine 468 and asparagine 664 are each glycosylated (N-linked (GlcNAc...) asparagine).

This sequence belongs to the SRP1/TIP1 family.

It is found in the secreted. In terms of biological role, secreted protein that may be involved in cell wall organization and biosynthesis. The protein is Secreted protein CSS1 of Saccharomyces cerevisiae (strain ATCC 204508 / S288c) (Baker's yeast).